A 297-amino-acid chain; its full sequence is XIAP-associated factor 1 (297 aa).

The segment at 22–99 (LHEAHCLMYL…QLAVRLNKVD (78 aa)) adopts a TRAF-type zinc-finger fold. The interval 178 to 255 (AVTPSPVGKP…NGKLRASSPV (78 aa)) is disordered. Residues 202–212 (QTSKAEKDVRP) are compositionally biased toward basic and acidic residues. The span at 229 to 245 (RQAPRGTNKTTNLSLKS) shows a compositional bias: polar residues.

Interacts with BIRC1, BIRC2, BIRC3, BIRC4, BIRC7 and BIRC8. Part of an complex consisting of BIRC4, XAF1 and BIRC5; the complex formation requires IFN-beta stimulation. Interacts with RNF114, the interaction increases XAF1 stability and proapoptotic effects, and may regulate IFN signaling.

The protein resides in the cytoplasm. The protein localises to the nucleus. It is found in the mitochondrion. Functionally, seems to function as a negative regulator of members of the IAP (inhibitor of apoptosis protein) family. Inhibits anti-caspase activity of BIRC4. Induces cleavage and inactivation of BIRC4 independent of caspase activation. Mediates TNF-alpha-induced apoptosis and is involved in apoptosis in trophoblast cells. May inhibit BIRC4 indirectly by activating the mitochondrial apoptosis pathway. After translocation to mitochondria, promotes translocation of BAX to mitochondria and cytochrome c release from mitochondria. Seems to promote the redistribution of BIRC4 from the cytoplasm to the nucleus, probably independent of BIRC4 inactivation which seems to occur in the cytoplasm. The BIRC4-XAF1 complex mediates down-regulation of BIRC5/survivin; the process requires the E3 ligase activity of BIRC4. Seems to be involved in cellular sensitivity to the proapoptotic actions of TRAIL. May be a tumor suppressor by mediating apoptosis resistance of cancer cells. The protein is XIAP-associated factor 1 (XAF1) of Bos taurus (Bovine).